The sequence spans 183 residues: Putative ribosomal N-acetyltransferase YdaF (183 aa).

One can recognise an N-acetyltransferase domain in the interval 10–176 (ITIRLLEPKD…HDLVYYSLLK (167 aa)).

This sequence belongs to the acetyltransferase family. As to quaternary structure, homohexamer, and homodimer.

Functionally, putative N-acetyltransferase. May act on ribosomal proteins (Potential). The sequence is that of Putative ribosomal N-acetyltransferase YdaF (ydaF) from Bacillus subtilis (strain 168).